The chain runs to 864 residues: Leucine--tRNA ligase (864 aa).

A 'HIGH' region motif is present at residues 42–52 (PYPSGKLHMGH). The 'KMSKS' region signature appears at 624–628 (KMSKS). Position 627 (K627) interacts with ATP.

The protein belongs to the class-I aminoacyl-tRNA synthetase family.

The protein resides in the cytoplasm. It catalyses the reaction tRNA(Leu) + L-leucine + ATP = L-leucyl-tRNA(Leu) + AMP + diphosphate. The polypeptide is Leucine--tRNA ligase (Burkholderia mallei (strain NCTC 10229)).